The sequence spans 464 residues: Chaperone SurA (464 aa).

Positions 1–25 (MTRYFSIVLSLLLAVSCVFLPVASA) are cleaved as a signal peptide. 2 PpiC domains span residues 175–277 (GAQY…KLVE) and 292–391 (ATEY…QRLG). The segment at 439–464 (PADDHQTPSAAVIPATGAVLPSATKH) is disordered.

Its subcellular location is the periplasm. It carries out the reaction [protein]-peptidylproline (omega=180) = [protein]-peptidylproline (omega=0). Its function is as follows. Chaperone involved in the correct folding and assembly of outer membrane proteins. Recognizes specific patterns of aromatic residues and the orientation of their side chains, which are found more frequently in integral outer membrane proteins. May act in both early periplasmic and late outer membrane-associated steps of protein maturation. The protein is Chaperone SurA of Xylella fastidiosa (strain 9a5c).